The chain runs to 564 residues: Periplasmic [NiFe] hydrogenase large subunit (564 aa).

The Ni(2+) site is built by cysteine 72, cysteine 75, cysteine 543, and cysteine 546. Positions 550–564 (VIEPETNEILKFKVC) are excised as a propeptide.

It belongs to the [NiFe]/[NiFeSe] hydrogenase large subunit family. As to quaternary structure, heterodimer of a large and a small subunit. The cofactor is Ni(2+).

The protein localises to the periplasm. It catalyses the reaction 2 Fe(III)-[cytochrome c3] + H2 = 2 Fe(II)-[cytochrome c3] + 2 H(+). The protein is Periplasmic [NiFe] hydrogenase large subunit (hydB) of Solidesulfovibrio fructosivorans (Desulfovibrio fructosivorans).